The chain runs to 116 residues: Phosphoribosyl-AMP cyclohydrolase (116 aa).

Asp80 is a binding site for Mg(2+). Cys81 contacts Zn(2+). Asp82 and Asp84 together coordinate Mg(2+). Positions 98 and 105 each coordinate Zn(2+).

This sequence belongs to the PRA-CH family. As to quaternary structure, homodimer. The cofactor is Mg(2+). Requires Zn(2+) as cofactor.

It is found in the cytoplasm. It catalyses the reaction 1-(5-phospho-beta-D-ribosyl)-5'-AMP + H2O = 1-(5-phospho-beta-D-ribosyl)-5-[(5-phospho-beta-D-ribosylamino)methylideneamino]imidazole-4-carboxamide. Its pathway is amino-acid biosynthesis; L-histidine biosynthesis; L-histidine from 5-phospho-alpha-D-ribose 1-diphosphate: step 3/9. Functionally, catalyzes the hydrolysis of the adenine ring of phosphoribosyl-AMP. The chain is Phosphoribosyl-AMP cyclohydrolase from Trichormus variabilis (strain ATCC 29413 / PCC 7937) (Anabaena variabilis).